The chain runs to 145 residues: MTVFCELDSGGELPEYTTPGAAGADLRANIEEPIALLPGQRALIPTGIKAEIPEGYELQVRPRSGLALKHGITVLNSPGTIDSDYRGEIRVILINFGDSTFIIEPKMRIAQVVLSPVVQATFVVKQESLAETARGSGGFGHTGAS.

Residues 63–65 (RSG), Asn-76, and 80–82 (TID) each bind substrate.

The protein belongs to the dUTPase family. The cofactor is Mg(2+).

It catalyses the reaction dUTP + H2O = dUMP + diphosphate + H(+). It participates in pyrimidine metabolism; dUMP biosynthesis; dUMP from dCTP (dUTP route): step 2/2. This enzyme is involved in nucleotide metabolism: it produces dUMP, the immediate precursor of thymidine nucleotides and it decreases the intracellular concentration of dUTP so that uracil cannot be incorporated into DNA. This Chlamydia pneumoniae (Chlamydophila pneumoniae) protein is Deoxyuridine 5'-triphosphate nucleotidohydrolase.